Here is a 432-residue protein sequence, read N- to C-terminus: Adenylosuccinate synthetase (432 aa).

GTP-binding positions include 12 to 18 (GDEGKGK) and 40 to 42 (GHT). The active-site Proton acceptor is the Asp-13. Residues Asp-13 and Gly-40 each contribute to the Mg(2+) site. IMP contacts are provided by residues 13-16 (DEGK), 38-41 (NAGH), Thr-132, Arg-146, Gln-226, Thr-241, and Arg-305. His-41 acts as the Proton donor in catalysis. 301-307 (TVTGRKR) serves as a coordination point for substrate. GTP is bound by residues Arg-307, 333 to 335 (KLD), and 415 to 417 (STS).

This sequence belongs to the adenylosuccinate synthetase family. As to quaternary structure, homodimer. Requires Mg(2+) as cofactor.

The protein resides in the cytoplasm. The catalysed reaction is IMP + L-aspartate + GTP = N(6)-(1,2-dicarboxyethyl)-AMP + GDP + phosphate + 2 H(+). The protein operates within purine metabolism; AMP biosynthesis via de novo pathway; AMP from IMP: step 1/2. Its function is as follows. Plays an important role in the de novo pathway of purine nucleotide biosynthesis. Catalyzes the first committed step in the biosynthesis of AMP from IMP. In Sinorhizobium fredii (strain NBRC 101917 / NGR234), this protein is Adenylosuccinate synthetase.